The primary structure comprises 239 residues: MIMRPSKRAANELRPLSFTTQFTRYAEGSVLVTLGNTKVICNASIVEGVPRFLKNSEQGWLTAEYGMLPRSTHSRMDREASRGKQGGRTVEIQRLIGRSLRAALDLKLLGPYTITIDCDVIQADGGTRTAAINGSCIAMIEALRHLQRKGILQTDPLKHKVAAVSVGIYKGVPVLDLDYAEDSNAHTDMNVVMTDNDAFIEIQGTAEGDAFHAKELDALINLARHGIKQIIEKQQEALS.

Phosphate is bound by residues Arg88 and 126–128 (GTR).

Belongs to the RNase PH family. In terms of assembly, homohexameric ring arranged as a trimer of dimers.

It catalyses the reaction tRNA(n+1) + phosphate = tRNA(n) + a ribonucleoside 5'-diphosphate. In terms of biological role, phosphorolytic 3'-5' exoribonuclease that plays an important role in tRNA 3'-end maturation. Removes nucleotide residues following the 3'-CCA terminus of tRNAs; can also add nucleotides to the ends of RNA molecules by using nucleoside diphosphates as substrates, but this may not be physiologically important. Probably plays a role in initiation of 16S rRNA degradation (leading to ribosome degradation) during starvation. This Coxiella burnetii (strain Dugway 5J108-111) protein is Ribonuclease PH.